The chain runs to 66 residues: MDWLAKYWWILVLVFLVGVLINVIKDLKRVDHKKFLANKPELPPHRDFNDKWDDDDDWPKKDQPKK.

Residues 4–24 (LAKYWWILVLVFLVGVLINVI) form a helical membrane-spanning segment. Positions 39–66 (KPELPPHRDFNDKWDDDDDWPKKDQPKK) are disordered. The segment covering 42-51 (LPPHRDFNDK) has biased composition (basic and acidic residues).

The protein belongs to the UPF0370 family.

The protein localises to the cell membrane. The sequence is that of UPF0370 protein CKO_00315 from Citrobacter koseri (strain ATCC BAA-895 / CDC 4225-83 / SGSC4696).